The chain runs to 415 residues: Multifunctional CCA protein (415 aa).

Positions 8 and 11 each coordinate ATP. Residues glycine 8 and arginine 11 each coordinate CTP. Glutamate 21 and aspartate 23 together coordinate Mg(2+). Arginine 91, arginine 137, and arginine 140 together coordinate ATP. CTP contacts are provided by arginine 91, arginine 137, and arginine 140. In terms of domain architecture, HD spans 228 to 329 (AGTHTLMALD…VELFEGLDLF (102 aa)).

Belongs to the tRNA nucleotidyltransferase/poly(A) polymerase family. Bacterial CCA-adding enzyme type 1 subfamily. Monomer. Can also form homodimers and oligomers. Mg(2+) serves as cofactor. The cofactor is Ni(2+).

It catalyses the reaction a tRNA precursor + 2 CTP + ATP = a tRNA with a 3' CCA end + 3 diphosphate. It carries out the reaction a tRNA with a 3' CCA end + 2 CTP + ATP = a tRNA with a 3' CCACCA end + 3 diphosphate. Catalyzes the addition and repair of the essential 3'-terminal CCA sequence in tRNAs without using a nucleic acid template. Adds these three nucleotides in the order of C, C, and A to the tRNA nucleotide-73, using CTP and ATP as substrates and producing inorganic pyrophosphate. tRNA 3'-terminal CCA addition is required both for tRNA processing and repair. Also involved in tRNA surveillance by mediating tandem CCA addition to generate a CCACCA at the 3' terminus of unstable tRNAs. While stable tRNAs receive only 3'-terminal CCA, unstable tRNAs are marked with CCACCA and rapidly degraded. The chain is Multifunctional CCA protein from Halorhodospira halophila (strain DSM 244 / SL1) (Ectothiorhodospira halophila (strain DSM 244 / SL1)).